The chain runs to 444 residues: Presenilin sel-12 (444 aa).

The Cytoplasmic portion of the chain corresponds to 1-45 (MPSTRRQQEGGGADAETHTVYGTNLITNRNSQEDENVVEEAELKY). The chain crosses the membrane as a helical span at residues 46-66 (GASHVIHLFVPVSLCMALVVF). Residues 67 to 101 (TMNTITFYSQNNGRHLLYTPFVRETDSIVEKGLMS) are Lumenal-facing. The helical transmembrane segment at 102–122 (LGNALVMLCVVVLMTVLLIVF) threads the bilayer. Residues 123-130 (YKYKFYKL) lie on the Cytoplasmic side of the membrane. The chain crosses the membrane as a helical span at residues 131–151 (IHGWLIVSSFLLLFLFTTIYV). The Lumenal portion of the chain corresponds to 152–163 (QEVLKSFDVSPS). The chain crosses the membrane as a helical span at residues 164 to 184 (ALLVLFGLGNYGVLGMMCIHW). The Cytoplasmic segment spans residues 185 to 189 (KGPLR). Residues 190 to 210 (LQQFYLITMSALMALVFIKYL) traverse the membrane as a helical segment. Topologically, residues 211 to 212 (PE) are lumenal. A helical membrane pass occupies residues 213–233 (WTVWFVLFVISVWDLVAVLTP). D226 is a catalytic residue. Over 234–359 (KGPLRYLVET…RHEEEERGVK (126 aa)) the chain is Cytoplasmic. The disordered stretch occupies residues 275-331 (TDPREPTSSDSNTSTAFPGEASCSSETPKRPKVKRIPQKVQIESNTTASTTQNSGVR). Composition is skewed to polar residues over residues 282–300 (SSDSNTSTAFPGEASCSSE) and 315–329 (QIESNTTASTTQNSG). Residues 360 to 380 (LGLGDFIFYSVLLGKASSYFD) traverse the membrane as a helical segment. The active site involves D364. The Lumenal portion of the chain corresponds to 381–384 (WNTT). The chain crosses the membrane as a helical span at residues 385 to 405 (IACYVAILIGLCFTLVLLAVF). Residues 406–413 (KRALPALP) are Cytoplasmic-facing. The PAL signature appears at 410–412 (PAL). The helical intramembrane region spans 414–434 (ISIFSGLIFYFCTRWIITPFV). Topologically, residues 435–444 (TQVSQKCLLY) are cytoplasmic.

It belongs to the peptidase A22A family. Homodimer. Component of the gamma-secretase complex, a complex probably composed of the presenilin homodimer (sel-12, hop-1 or spe-4), nicastrin (aph-2), aph-1 and pen-2. Interacts with sel-10. Expressed in most neurons.

The protein localises to the endoplasmic reticulum membrane. The protein resides in the golgi apparatus membrane. Functionally, probable catalytic subunit of the gamma-secretase complex, an endoprotease complex that catalyzes the intramembrane cleavage of integral membrane proteins such as Notch receptors (lin-12 or glp-1). Provides the major presenilin function compared to hop-1 and spe-4. Required cell-autonomously for correct neurite connectivity of the AIY cholinergic interneurons and their correct functioning in thermotaxis. Required for mesodermal patterning of muscle function. Promotes basement membrane gap formation during tissue remodeling. The chain is Presenilin sel-12 from Caenorhabditis elegans.